We begin with the raw amino-acid sequence, 215 residues long: UPF0319 protein VVA1446 (215 aa).

Positions 1-21 (MNIIKPLTCILAMSISGLATA) are cleaved as a signal peptide.

It belongs to the UPF0319 family.

This chain is UPF0319 protein VVA1446, found in Vibrio vulnificus (strain YJ016).